We begin with the raw amino-acid sequence, 548 residues long: Acetylcholine receptor subunit alpha-type des-2 (548 aa).

Positions 1-19 (MLIIIQSLLLATTASLCIA) are cleaved as a signal peptide. The Extracellular segment spans residues 21 to 239 (TPVPTQIRLV…LTLYLRRKPL (219 aa)). N-linked (GlcNAc...) asparagine glycans are attached at residues asparagine 52, asparagine 96, and asparagine 224. Transmembrane regions (helical) follow at residues 240-260 (FYLVNLIIPTSIITLIAIVGF), 274-294 (VSLGITTLLSMSILMLMVSDQ), and 301-321 (FIPLIGWFILAMIIVISLGTV). Positions 422-460 (LIHLSPTAHQPDESISPSAPPVPSSSPLPPPLTPGPADD) are disordered. Residues 439-455 (SAPPVPSSSPLPPPLTP) show a composition bias toward pro residues. A helical membrane pass occupies residues 517-537 (FVIFVVAFLIITFGINFIGFI). At 538-548 (HWHQAGVEYGG) the chain is on the cytoplasmic side.

Belongs to the ligand-gated ion channel (TC 1.A.9) family. Acetylcholine receptor (TC 1.A.9.1) subfamily. The functional receptor is a heteromer of deg-3 and des-2. Interacts with ric-3; which is required for proper receptor folding.

The protein localises to the cell membrane. In terms of biological role, subunit of the non-synaptic neuronal acetylcholine receptor (AChR), which may play a role in chemotaxis towards choline. After binding choline or acetylcholine, the AChR responds by an extensive change in conformation that affects all subunits and leads to opening of an ion-conducting channel across the plasma membrane. The protein is Acetylcholine receptor subunit alpha-type des-2 (des-2) of Caenorhabditis elegans.